The primary structure comprises 188 residues: Pyridoxal 5'-phosphate synthase subunit PdxT (188 aa).

Residue 47–49 (GES) coordinates L-glutamine. Cys-79 serves as the catalytic Nucleophile. Residues Arg-105 and 134–135 (IR) contribute to the L-glutamine site. Active-site charge relay system residues include His-170 and Glu-172.

This sequence belongs to the glutaminase PdxT/SNO family. As to quaternary structure, in the presence of PdxS, forms a dodecamer of heterodimers. Only shows activity in the heterodimer.

It carries out the reaction aldehydo-D-ribose 5-phosphate + D-glyceraldehyde 3-phosphate + L-glutamine = pyridoxal 5'-phosphate + L-glutamate + phosphate + 3 H2O + H(+). It catalyses the reaction L-glutamine + H2O = L-glutamate + NH4(+). It participates in cofactor biosynthesis; pyridoxal 5'-phosphate biosynthesis. In terms of biological role, catalyzes the hydrolysis of glutamine to glutamate and ammonia as part of the biosynthesis of pyridoxal 5'-phosphate. The resulting ammonia molecule is channeled to the active site of PdxS. The chain is Pyridoxal 5'-phosphate synthase subunit PdxT from Listeria monocytogenes serotype 4a (strain HCC23).